The sequence spans 125 residues: Small ribosomal subunit protein uS11 (125 aa).

The protein belongs to the universal ribosomal protein uS11 family. As to quaternary structure, part of the 30S ribosomal subunit. Interacts with proteins S7 and S18. Binds to IF-3.

In terms of biological role, located on the platform of the 30S subunit, it bridges several disparate RNA helices of the 16S rRNA. Forms part of the Shine-Dalgarno cleft in the 70S ribosome. The sequence is that of Small ribosomal subunit protein uS11 from Coprothermobacter proteolyticus (strain ATCC 35245 / DSM 5265 / OCM 4 / BT).